A 1172-amino-acid chain; its full sequence is Thrombospondin-2 (1172 aa).

Positions 1 to 18 (MVWRLVLLALWVWPSTQA) are cleaved as a signal peptide. Positions 19-215 (GHQDKDTTFD…LQNVHLVFEN (197 aa)) constitute a Laminin G-like domain. The segment at 19 to 232 (GHQDKDTTFD…KKGCQQGQGA (214 aa)) is heparin-binding. N-linked (GlcNAc...) asparagine glycans are attached at residues N151, N316, and N330. The VWFC domain maps to 318–375 (SACWQDGRFFAENETWVVDSCTTCTCKKFKTICHQITCPPATCASPSFVEGECCPSCL). TSP type-1 domains follow at residues 381–431 (EEGW…SKCD), 437–492 (DGGW…APCP), and 494–549 (DGRW…RSCP). 27 disulfide bridges follow: C393/C425, C397/C430, C408/C415, C449/C486, C453/C491, C464/C476, C506/C543, C510/C548, C521/C533, C553/C564, C558/C574, C577/C588, C594/C610, C601/C619, C622/C646, C652/C665, C659/C678, C680/C691, C707/C715, C720/C740, C756/C776, C779/C799, C815/C835, C838/C858, C876/C896, C912/C932, and C948/C1169. N457 is a glycosylation site (N-linked (GlcNAc...) asparagine). Positions 549-589 (PVDGCLSNPCFPGAQCSSFPDGSWSCGSCPVGFLGNGTHCE) constitute an EGF-like 1 domain. Residue N584 is glycosylated (N-linked (GlcNAc...) asparagine). An EGF-like 2 domain is found at 648–692 (PENPCKDKTHNCHKHAECIYLGHFSDPMYKCECQTGYAGDGLICG). TSP type-3 repeat units follow at residues 693–728 (EDSDLDGWPNLNLVCATNATYHCIKDNCPHLPNSGQ), 729–764 (EDFDKDGIGDACDDDDDNDGVTDEKDNCQLLFNPRQ), 765–787 (ADYDKDEVGDRCDNCPYVHNPAQ), 788–823 (IDTDNNGEGDACSVDIDGDDVFNERDNCPYVYNTDQ), 824–846 (RDTDGDGVGDHCDNCPLVHNPDQ), 847–884 (TDVDNDLVGDQCDNNEDIDDDGHQNNQDNCPYISNANQ), 885–920 (ADHDRDGQGDACDPDDDNDGVPDDRDNCRLVFNPDQ), and 921–956 (EDLDGDGRGDICKDDFDNDNIPDIDDVCPENNAISE). N-linked (GlcNAc...) asparagine glycosylation is present at N710. Positions 843-931 (NPDQTDVDND…DLDGDGRGDI (89 aa)) are disordered. Residues 847 to 866 (TDVDNDLVGDQCDNNEDIDD) show a composition bias toward acidic residues. The segment covering 870-884 (QNNQDNCPYISNANQ) has biased composition (polar residues). Residues 896-905 (CDPDDDNDGV) are compositionally biased toward acidic residues. The short motif at 928–930 (RGD) is the Cell attachment site element. Positions 960–1172 (RNFQMVPLDP…SDLKYECRDI (213 aa)) constitute a TSP C-terminal domain. N-linked (GlcNAc...) asparagine glycosylation is present at N1069.

Belongs to the thrombospondin family. In terms of assembly, homotrimer; disulfide-linked. Interacts (via the TSP type I repeats) with CD36; the interaction conveys an antiangiogenic effect. Interacts (via the TSP type I repeats) with HRG; the interaction blocks the antiangiogenic effect of THBS2 with CD36. Can bind to fibrinogen, fibronectin, laminin and type V collagen. As to expression, high expression in invertebral disk tissue.

Functionally, adhesive glycoprotein that mediates cell-to-cell and cell-to-matrix interactions. Ligand for CD36 mediating antiangiogenic properties. The sequence is that of Thrombospondin-2 (THBS2) from Homo sapiens (Human).